A 275-amino-acid chain; its full sequence is Vitamin B12-binding protein (275 aa).

The first 19 residues, 1 to 19, serve as a signal peptide directing secretion; it reads MMNKLCFALPLIFSDASFA. The Fe/B12 periplasmic-binding domain maps to 25–272; it reads RIISLAPHST…EVCEHFETVR (248 aa). Cys185 and Cys265 are disulfide-bonded.

Belongs to the BtuF family. As to quaternary structure, the complex is composed of two ATP-binding proteins (BtuD), two transmembrane proteins (BtuC) and a solute-binding protein (BtuF).

The protein localises to the periplasm. Part of the ABC transporter complex BtuCDF involved in vitamin B12 import. Binds vitamin B12 and delivers it to the periplasmic surface of BtuC. This Vibrio campbellii (strain ATCC BAA-1116) protein is Vitamin B12-binding protein.